The chain runs to 907 residues: Leucine--tRNA ligase (907 aa).

Residues 42–52 carry the 'HIGH' region motif; the sequence is PYPSGKLHMGH. The short motif at 651–655 is the 'KMSKS' region element; sequence TMSKS. K654 contributes to the ATP binding site.

It belongs to the class-I aminoacyl-tRNA synthetase family.

It localises to the cytoplasm. It catalyses the reaction tRNA(Leu) + L-leucine + ATP = L-leucyl-tRNA(Leu) + AMP + diphosphate. The protein is Leucine--tRNA ligase of Verminephrobacter eiseniae (strain EF01-2).